The following is a 60-amino-acid chain: Cecropin-B (60 aa).

The N-terminal stretch at 1–25 (MNFTKLFILVAIAVLVVVGVQPVDG) is a signal peptide. Leu59 carries the leucine amide modification.

Belongs to the cecropin family.

It is found in the secreted. Functionally, cecropins have lytic and antibacterial activity against several Gram-positive and Gram-negative bacteria. The chain is Cecropin-B (CecB) from Anopheles gambiae (African malaria mosquito).